Here is a 114-residue protein sequence, read N- to C-terminus: UPF0145 protein STK_10800 (114 aa).

The protein belongs to the UPF0145 family.

This chain is UPF0145 protein STK_10800, found in Sulfurisphaera tokodaii (strain DSM 16993 / JCM 10545 / NBRC 100140 / 7) (Sulfolobus tokodaii).